The sequence spans 447 residues: Argininosuccinate synthase (447 aa).

Residues 20 to 28 (AFSGGLDTS) and A46 each bind ATP. Residue Y102 coordinates L-citrulline. 2 residues coordinate ATP: G132 and T134. Residues T134, N138, and D139 each coordinate L-aspartate. N138 contributes to the L-citrulline binding site. Position 139 (D139) interacts with ATP. 2 residues coordinate L-citrulline: R142 and S195. D197 contacts ATP. L-citrulline-binding residues include T204, E206, and E283.

It belongs to the argininosuccinate synthase family. Type 2 subfamily. As to quaternary structure, homotetramer.

The protein localises to the cytoplasm. The enzyme catalyses L-citrulline + L-aspartate + ATP = 2-(N(omega)-L-arginino)succinate + AMP + diphosphate + H(+). It functions in the pathway amino-acid biosynthesis; L-arginine biosynthesis; L-arginine from L-ornithine and carbamoyl phosphate: step 2/3. The protein is Argininosuccinate synthase of Neisseria meningitidis serogroup C / serotype 2a (strain ATCC 700532 / DSM 15464 / FAM18).